The sequence spans 258 residues: Acyl-[acyl-carrier-protein]--UDP-N-acetylglucosamine O-acyltransferase (258 aa).

The protein belongs to the transferase hexapeptide repeat family. LpxA subfamily. Homotrimer.

It localises to the cytoplasm. It catalyses the reaction a (3R)-hydroxyacyl-[ACP] + UDP-N-acetyl-alpha-D-glucosamine = a UDP-3-O-[(3R)-3-hydroxyacyl]-N-acetyl-alpha-D-glucosamine + holo-[ACP]. It functions in the pathway glycolipid biosynthesis; lipid IV(A) biosynthesis; lipid IV(A) from (3R)-3-hydroxytetradecanoyl-[acyl-carrier-protein] and UDP-N-acetyl-alpha-D-glucosamine: step 1/6. In terms of biological role, involved in the biosynthesis of lipid A, a phosphorylated glycolipid that anchors the lipopolysaccharide to the outer membrane of the cell. The chain is Acyl-[acyl-carrier-protein]--UDP-N-acetylglucosamine O-acyltransferase from Pseudomonas fluorescens (strain SBW25).